A 409-amino-acid chain; its full sequence is Probable plastid-lipid-associated protein 12, chloroplastic (409 aa).

A chloroplast-targeting transit peptide spans 1–55 (MVAVRFYAVEMSLPCLCPCPSSPISLSLCSPRFNLLNTTSRRLGLSRNCRTLRIS).

Belongs to the PAP/fibrillin family.

The protein localises to the plastid. The protein resides in the chloroplast thylakoid. The protein is Probable plastid-lipid-associated protein 12, chloroplastic (PAP12) of Arabidopsis thaliana (Mouse-ear cress).